A 231-amino-acid chain; its full sequence is Heptaprenylglyceryl phosphate synthase (231 aa).

Residue K12 participates in sn-glycerol 1-phosphate binding. Mg(2+) is bound by residues D14 and T40. Sn-glycerol 1-phosphate contacts are provided by residues 159–164 (YLEYSG), G189, and 209–210 (GN).

This sequence belongs to the GGGP/HepGP synthase family. Group I subfamily. Homodimer. Mg(2+) is required as a cofactor.

The enzyme catalyses sn-glycerol 1-phosphate + all-trans-heptaprenyl diphosphate = 3-heptaprenyl-sn-glycero-1-phosphate + diphosphate. The protein operates within membrane lipid metabolism; glycerophospholipid metabolism. In terms of biological role, prenyltransferase that catalyzes in vivo the transfer of the heptaprenyl moiety of heptaprenyl pyrophosphate (HepPP; 35 carbon atoms) to the C3 hydroxyl of sn-glycerol-1-phosphate (G1P), producing heptaprenylglyceryl phosphate (HepGP). This reaction is an ether-bond-formation step in the biosynthesis of archaea-type G1P-based membrane lipids found in Bacillales. This Staphylococcus haemolyticus (strain JCSC1435) protein is Heptaprenylglyceryl phosphate synthase.